Consider the following 64-residue polypeptide: Putative antitoxin MJ0975 (64 aa).

It belongs to the UPF0165 family.

Functionally, possibly the antitoxin component of a type II toxin-antitoxin (TA) system. Its cognate toxin is VapC2 (Potential). This is Putative antitoxin MJ0975 (vapB2) from Methanocaldococcus jannaschii (strain ATCC 43067 / DSM 2661 / JAL-1 / JCM 10045 / NBRC 100440) (Methanococcus jannaschii).